A 402-amino-acid chain; its full sequence is Probable tRNA pseudouridine synthase tag-124 (402 aa).

The active-site Nucleophile is the D85. The interval 383-402 (SKKEKMAEKKKNGEESSDKL) is disordered.

Belongs to the tRNA pseudouridine synthase TruA family.

The enzyme catalyses a uridine in tRNA = a pseudouridine in tRNA. Formation of pseudouridine at position 38 and 39 in the anticodon stem and loop of transfer RNAs. The chain is Probable tRNA pseudouridine synthase tag-124 (tag-124) from Caenorhabditis elegans.